Here is a 418-residue protein sequence, read N- to C-terminus: Glutamyl-tRNA reductase (418 aa).

Substrate-binding positions include 51 to 54 (TCNR), Ser107, 112 to 114 (EPQ), and Gln118. Cys52 serves as the catalytic Nucleophile. 187 to 192 (GAGETA) is an NADP(+) binding site.

It belongs to the glutamyl-tRNA reductase family. Homodimer.

It carries out the reaction (S)-4-amino-5-oxopentanoate + tRNA(Glu) + NADP(+) = L-glutamyl-tRNA(Glu) + NADPH + H(+). The protein operates within porphyrin-containing compound metabolism; protoporphyrin-IX biosynthesis; 5-aminolevulinate from L-glutamyl-tRNA(Glu): step 1/2. Catalyzes the NADPH-dependent reduction of glutamyl-tRNA(Glu) to glutamate 1-semialdehyde (GSA). The polypeptide is Glutamyl-tRNA reductase (Dichelobacter nodosus (strain VCS1703A)).